The following is a 156-amino-acid chain: MKCRLIATGERAPSWVAQGFAEYQKRLSHWMPLELVEIEPGMRGKGRDAQRATDDEGRRVLAALPKNAYVVALDVPGRPLSSEQLAQRMEHWRGQGRDLAFLIGGPEGHAAEVLKSASESWSIGPLTLPHMLVRLIVAEQLYRAAAMLANHPYHRA.

Residues leucine 73, glycine 104, and 123 to 128 (IGPLTL) contribute to the S-adenosyl-L-methionine site.

Belongs to the RNA methyltransferase RlmH family. As to quaternary structure, homodimer.

The protein resides in the cytoplasm. The catalysed reaction is pseudouridine(1915) in 23S rRNA + S-adenosyl-L-methionine = N(3)-methylpseudouridine(1915) in 23S rRNA + S-adenosyl-L-homocysteine + H(+). Its function is as follows. Specifically methylates the pseudouridine at position 1915 (m3Psi1915) in 23S rRNA. This Xanthomonas axonopodis pv. citri (strain 306) protein is Ribosomal RNA large subunit methyltransferase H.